The sequence spans 27 residues: Endoglucanase gh5 (27 aa).

Glutamate 6 serves as the catalytic Nucleophile.

It catalyses the reaction Endohydrolysis of (1-&gt;4)-beta-D-glucosidic linkages in cellulose, lichenin and cereal beta-D-glucans.. Activity is stimulated by zinc ions, potassium ions and DTT. Activity is inhibited by manganese and chloride ions. Its function is as follows. Endoglucanase (EG) that cleaves the internal beta-1,4-glucosidic bonds in cellulose. The polypeptide is Endoglucanase gh5 (Fomes meliae (Fomitopsis meliae)).